A 321-amino-acid chain; its full sequence is L-carnitine dehydrogenase (321 aa).

Residue 7–12 coordinates NAD(+); sequence GTGVIG.

Belongs to the 3-hydroxyacyl-CoA dehydrogenase family. L-carnitine dehydrogenase subfamily. In terms of assembly, homodimer.

Its subcellular location is the cytoplasm. The enzyme catalyses carnitine + NAD(+) = 3-dehydrocarnitine + NADH + H(+). The protein operates within amine and polyamine metabolism; carnitine metabolism. Catalyzes the NAD(+)-dependent oxidation of L-carnitine to 3-dehydrocarnitine. The protein is L-carnitine dehydrogenase of Staphylococcus epidermidis (strain ATCC 12228 / FDA PCI 1200).